Here is a 203-residue protein sequence, read N- to C-terminus: MDKAFDEIIGNSHTDSSSNHKVTRYRRRDLRNELGPRLGFAPSDAASRSKDRLYREREEPPLPKRIRISKIPLDVSDYTLDDMIKEFGSPIFSKIFDNKEDRTCIYEFEDPEVLEKIVERYNGHELHNAKIEVEIYQPQRKHSRMNAHNRRKQTAQEQGRGRPGSHYRQRPNRVSKKNKGREKNNTPTSVEALDAELDAYMKG.

An N-acetylmethionine modification is found at methionine 1. 2 disordered regions span residues 1-60 (MDKA…REEP) and 134-203 (EIYQ…YMKG). Residues 11 to 20 (NSHTDSSSNH) are compositionally biased toward polar residues. The span at 47-60 (SRSKDRLYREREEP) shows a compositional bias: basic and acidic residues. Residues 64–138 (KRIRISKIPL…AKIEVEIYQP (75 aa)) form the RRM domain. Basic residues-rich tracts occupy residues 139 to 153 (QRKHSRMNAHNRRKQ) and 163 to 180 (PGSHYRQRPNRVSKKNKG).

It belongs to the YRA1 family. Associates with mRNPs. Interacts with YRA1.

The protein resides in the nucleus. Functionally, involved in export of poly(A) mRNAs from the nucleus. Recruited to the coding sequences as well as poly-A sites of active genes. The protein is RNA annealing protein YRA2 (YRA2) of Saccharomyces cerevisiae (strain RM11-1a) (Baker's yeast).